Consider the following 254-residue polypeptide: 3-deoxy-manno-octulosonate cytidylyltransferase (254 aa).

It belongs to the KdsB family.

It localises to the cytoplasm. The catalysed reaction is 3-deoxy-alpha-D-manno-oct-2-ulosonate + CTP = CMP-3-deoxy-beta-D-manno-octulosonate + diphosphate. It participates in nucleotide-sugar biosynthesis; CMP-3-deoxy-D-manno-octulosonate biosynthesis; CMP-3-deoxy-D-manno-octulosonate from 3-deoxy-D-manno-octulosonate and CTP: step 1/1. The protein operates within bacterial outer membrane biogenesis; lipopolysaccharide biosynthesis. Functionally, activates KDO (a required 8-carbon sugar) for incorporation into bacterial lipopolysaccharide in Gram-negative bacteria. This is 3-deoxy-manno-octulosonate cytidylyltransferase from Chlamydia felis (strain Fe/C-56) (Chlamydophila felis).